A 933-amino-acid polypeptide reads, in one-letter code: Isoleucine--tRNA ligase (933 aa).

The short motif at 57-67 (PYANGNIHVGH) is the 'HIGH' region element. Glu554 contributes to the L-isoleucyl-5'-AMP binding site. The short motif at 595–599 (KMSKS) is the 'KMSKS' region element. An ATP-binding site is contributed by Lys598.

Belongs to the class-I aminoacyl-tRNA synthetase family. IleS type 1 subfamily. As to quaternary structure, monomer.

The protein resides in the cytoplasm. The catalysed reaction is tRNA(Ile) + L-isoleucine + ATP = L-isoleucyl-tRNA(Ile) + AMP + diphosphate. In terms of biological role, catalyzes the attachment of isoleucine to tRNA(Ile). As IleRS can inadvertently accommodate and process structurally similar amino acids such as valine, to avoid such errors it has two additional distinct tRNA(Ile)-dependent editing activities. One activity is designated as 'pretransfer' editing and involves the hydrolysis of activated Val-AMP. The other activity is designated 'posttransfer' editing and involves deacylation of mischarged Val-tRNA(Ile). The sequence is that of Isoleucine--tRNA ligase from Streptococcus pyogenes serotype M1.